The sequence spans 313 residues: Putative S-adenosyl-L-methionine-dependent methyltransferase MUL_0706 (313 aa).

S-adenosyl-L-methionine contacts are provided by residues Asp-132 and 161–162 (DL).

The protein belongs to the UPF0677 family.

Functionally, exhibits S-adenosyl-L-methionine-dependent methyltransferase activity. The sequence is that of Putative S-adenosyl-L-methionine-dependent methyltransferase MUL_0706 from Mycobacterium ulcerans (strain Agy99).